The primary structure comprises 390 residues: Neuromedin-B receptor (390 aa).

The Extracellular portion of the chain corresponds to 1–44 (MPPKSLSNLSQTAGVNQSGFFPGASERDFLPATDRTTAEFVIRC). N-linked (GlcNAc...) asparagine glycans are attached at residues Asn-8 and Asn-16. Residues 45–65 (VIPSLYLLIITVGLLGNIVLV) form a helical membrane-spanning segment. The Cytoplasmic segment spans residues 66-76 (KIFLTNSAMRS). Residues 77–97 (VPNIFISNLAAGDVLLLLTCV) form a helical membrane-spanning segment. Over 98–117 (PVDASRYFLDEWMFGKVGCK) the chain is Extracellular. Cys-116 and Cys-198 are oxidised to a cystine. The helical transmembrane segment at 118-138 (LIPVIQLTSVGVSVFTLTALS) threads the bilayer. Residues 139–155 (ADRYRAIVNPMDIQTSG) are Cytoplasmic-facing. The chain crosses the membrane as a helical span at residues 156–176 (AVLWTCVKAGGIWVVSVLLAV). Residues 177–210 (PEAVFSEVARIDGLDNGSFTACIPYPQTDELHPK) lie on the Extracellular side of the membrane. Asn-192 carries N-linked (GlcNAc...) asparagine glycosylation. Residues 211–231 (IHSVLIFLVYFLIPLGIISVY) form a helical membrane-spanning segment. At 232–266 (YYHIAKTLIKSAHNLPGEYNEHTKKQMETRKRLAK) the chain is on the cytoplasmic side. The helical transmembrane segment at 267 to 287 (IVLVFVGCFVFCWFPNHILYM) threads the bilayer. Topologically, residues 288-305 (YRSFNYNEIDPSLGHMIV) are extracellular. The helical transmembrane segment at 306 to 328 (TLVARVLSFCNSCVNPFALYLLS) threads the bilayer. The Cytoplasmic portion of the chain corresponds to 329–390 (ESFRKHFNNQ…GHSVKQEMAL (62 aa)). Residue Cys-341 is the site of S-palmitoyl cysteine attachment. At Ser-352 the chain carries Phosphoserine.

This sequence belongs to the G-protein coupled receptor 1 family. Highly expressed in peripheral tissues where it is detected in the respiratory system, circulatory system, digestive system, urogenital system, lymphatic organs and endocrine system (at protein level). In the testis, expressed mainly in Leydig cells (at protein level).

It is found in the cell membrane. In terms of biological role, receptor for neuromedin-B. Contributes to the maintenance of basal sigh rate through signaling in the pre-Botzinger complex, a cluster of several thousand neurons in the ventrolateral medulla responsible for inspiration during respiratory activity. Contributes to the induction of sneezing following exposure to chemical irritants or allergens which causes release of NMB by nasal sensory neurons and activation of NMBR-expressing neurons in the sneeze-evoking region of the brainstem. These in turn activate neurons of the caudal ventral respiratory group, giving rise to the sneezing response. Contributes to induction of acute itch, possibly through its activation on dorsal root ganglion neurons by the NMB peptide. Plays a role in the innate immune response to influenza A virus infection by enhancing interferon alpha expression and reducing expression of IL6. Plays a role in CSF1-induced proliferation of osteoclast precursors by contributing to the positive regulation of the expression of the CSF1 receptor CSF1R. The sequence is that of Neuromedin-B receptor (NMBR) from Sus scrofa (Pig).